A 164-amino-acid chain; its full sequence is Diphosphoinositol polyphosphate phosphohydrolase 3-alpha (164 aa).

Substrate contacts are provided by residues Arg9, 17 to 19 (KKR), and 38 to 40 (SSR). A Nudix hydrolase domain is found at 17–144 (KKRAACLCFR…VHAEYLEKLK (128 aa)). Residues Gly49 and Glu65 each coordinate Mg(2+). The Nudix box signature appears at 50-71 (GGMEPEEEPGGAAVREVYEEAG). Catalysis depends on Glu68, which acts as the Proton acceptor. Residue Glu69 participates in Mg(2+) binding. Substrate is bound by residues 89–91 (PKH), Arg115, and Lys133. The segment at 144 to 164 (KLGGSPTNGNSMAPSSPDSDP) is disordered. Residues 148 to 164 (SPTNGNSMAPSSPDSDP) show a composition bias toward polar residues.

It belongs to the Nudix hydrolase family. DIPP subfamily. It depends on Mg(2+) as a cofactor. Mn(2+) serves as cofactor. In terms of tissue distribution, mainly expressed in testis and, at lower level in brain. According to PubMed:12121577, it is widely expressed.

The protein resides in the cytoplasm. The enzyme catalyses diphospho-myo-inositol polyphosphate + H2O = myo-inositol polyphosphate + phosphate.. The catalysed reaction is P(1),P(6)-bis(5'-adenosyl) hexaphosphate + H2O = adenosine 5'-pentaphosphate + AMP + 2 H(+). It carries out the reaction P(1),P(5)-bis(5'-adenosyl) pentaphosphate + H2O = adenosine 5'-tetraphosphate + AMP + 2 H(+). Functionally, cleaves a beta-phosphate from the diphosphate groups in PP-InsP5 (diphosphoinositol pentakisphosphate), suggesting that it may play a role in signal transduction. Also able to catalyze the hydrolysis of dinucleoside oligophosphates, with Ap6A and Ap5A being the preferred substrates. The major reaction products are ADP and p4a from Ap6A and ADP and ATP from Ap5A. Also able to hydrolyze 5-phosphoribose 1-diphosphate. In Homo sapiens (Human), this protein is Diphosphoinositol polyphosphate phosphohydrolase 3-alpha (NUDT10).